Here is a 161-residue protein sequence, read N- to C-terminus: uncharacterized protein (161 aa).

This is an uncharacterized protein from Caenorhabditis elegans.